A 435-amino-acid chain; its full sequence is 3-phosphoshikimate 1-carboxyvinyltransferase (435 aa).

The 3-phosphoshikimate site is built by lysine 21, serine 22, and arginine 26. Lysine 21 serves as a coordination point for phosphoenolpyruvate. The phosphoenolpyruvate site is built by glycine 98 and arginine 126. 3-phosphoshikimate is bound by residues serine 169, serine 170, glutamine 171, serine 197, aspartate 312, and lysine 339. Glutamine 171 contacts phosphoenolpyruvate. Aspartate 312 functions as the Proton acceptor in the catalytic mechanism. Residues arginine 343, arginine 386, and lysine 412 each coordinate phosphoenolpyruvate.

This sequence belongs to the EPSP synthase family. In terms of assembly, monomer.

The protein localises to the cytoplasm. The enzyme catalyses 3-phosphoshikimate + phosphoenolpyruvate = 5-O-(1-carboxyvinyl)-3-phosphoshikimate + phosphate. It functions in the pathway metabolic intermediate biosynthesis; chorismate biosynthesis; chorismate from D-erythrose 4-phosphate and phosphoenolpyruvate: step 6/7. Catalyzes the transfer of the enolpyruvyl moiety of phosphoenolpyruvate (PEP) to the 5-hydroxyl of shikimate-3-phosphate (S3P) to produce enolpyruvyl shikimate-3-phosphate and inorganic phosphate. The sequence is that of 3-phosphoshikimate 1-carboxyvinyltransferase from Clostridium beijerinckii (strain ATCC 51743 / NCIMB 8052) (Clostridium acetobutylicum).